The sequence spans 994 residues: Chloride channel protein 1 (994 aa).

Topologically, residues 1 to 118 (MERSQSQRHG…VLRRKLGEDW (118 aa)) are cytoplasmic. The chain crosses the membrane as a helical span at residues 119 to 150 (IFLVLLGLLMALVSWCMDYVSAKSLQAYKWTY). Topologically, residues 151–158 (AQMKPSLP) are extracellular. A helical membrane pass occupies residues 159–179 (LQYLAWVTFPLILILFSALFC). Residues 180 to 183 (QLIS) are Cytoplasmic-facing. Residues 184–189 (PQAVGS) constitute an intramembrane region (note=Loop between two helices). Positions 188 to 192 (GSGIP) match the Selectivity filter part_1 motif. Serine 189 contacts chloride. Residues 190–195 (GIPEMK) constitute an intramembrane region (helical). Residues 196-208 (TILRGVVLKEYLT) lie on the Cytoplasmic side of the membrane. Positions 209–224 (LKAFVAKVVALTAGLG) form an intramembrane region, helical. Residues 225 to 230 (SGIPVG) constitute an intramembrane region (note=Loop between two helices). The Selectivity filter part_2 motif lies at 230-234 (GKEGP). Positions 231 to 246 (KEGPFVHIASICAAVL) form an intramembrane region, helical. Topologically, residues 247–268 (SKFMSMFSGVYEQPYYYTDILT) are cytoplasmic. 2 consecutive intramembrane regions (helical) follow at residues 269-280 (VGCAVGVGCCFG) and 281-290 (TPLGGVLFSI). Residues 291 to 301 (EVTSTYFAVRN) are Cytoplasmic-facing. The chain crosses the membrane as a helical span at residues 302-321 (YWRGFFAATFSAFVFRVLAV). The Extracellular portion of the chain corresponds to 322-347 (WNKDAVTITALFRTNFRMDFPFDLKE). The helical transmembrane segment at 348 to 376 (LPAFAVIGICCGFLGAVFVYLHRQVMLGV) threads the bilayer. The Cytoplasmic segment spans residues 377–390 (RKHKCLSQFLAKHR). A helical membrane pass occupies residues 391–408 (LLYPGIVTFVIASLTFPP). Residues 409–414 (GMGQFM) are Extracellular-facing. Residues 415 to 418 (AGEL) constitute an intramembrane region (note=Loop between two helices). Residues 419–426 (MPREAIST) constitute an intramembrane region (helical). Residues 427–457 (LFDNNTWVKHIGDPQSLGQSAVWLHPQVNVI) lie on the Extracellular side of the membrane. An intramembrane region (helical) is located at residues 458 to 475 (IIILLFFVMKFWMSIVAT). Positions 476–482 (TMPIPCG) form an intramembrane region, note=Loop between two helices. The Selectivity filter part_3 signature appears at 482–486 (GGFMP). An intramembrane region (helical) is located at residues 483–498 (GFMPVFVLGAAFGRLV). Phenylalanine 484 serves as a coordination point for chloride. The Extracellular segment spans residues 499–521 (GEIMAMLFPEGILFDDIIYKILP). The segment at residues 522–538 (GGYAVIGAAALTGAVSH) is an intramembrane region (helical). An intramembrane region (note=Loop between two helices) is located at residues 539 to 540 (TV). Positions 541–554 (STAVICFELTGQIA) form an intramembrane region, helical. Over 555-557 (HIL) the chain is Extracellular. Residues 558–571 (PMMVAVILANMVAQ) constitute an intramembrane region (helical). The segment at residues 572–575 (SLQP) is an intramembrane region (note=Loop between two helices). Residues 576-578 (SLY) constitute an intramembrane region (helical). Tyrosine 578 provides a ligand contact to chloride. Over 579 to 994 (DSIIQVKKLP…DEEDEDELIL (416 aa)) the chain is Cytoplasmic. The region spanning 609–668 (MVRDVKFVSASCTYGELRNLLQATTVKTLPLVDSKDSMILLGSVERSELQSLLQRHLCAE) is the CBS 1 domain. The disordered stretch occupies residues 710-770 (EDEDEDLSRK…PEASDSADQR (61 aa)). Positions 725–739 (TPAPPPPSPPPPPSQ) are enriched in pro residues. The region spanning 827-882 (IDQSPFQLVEQTTLHKTHTLFSLLGLHLAYVTSMGKLRGVLALEELQKAIEGHTKS) is the CBS 2 domain. 2 disordered regions span residues 886 to 954 (LRPP…ARAE) and 971 to 994 (ELADILHGPSLRSTDEEDEDELIL). A Phosphoserine modification is found at serine 892. The span at 933–943 (PETPVPPPSPE) shows a compositional bias: pro residues. A compositionally biased stretch (acidic residues) spans 985-994 (DEEDEDELIL).

Belongs to the chloride channel (TC 2.A.49) family. ClC-1/CLCN1 subfamily. In terms of assembly, homodimer. As to expression, predominantly expressed in skeletal muscles.

The protein localises to the cell membrane. It localises to the sarcolemma. The protein resides in the T-tubule. The enzyme catalyses chloride(in) = chloride(out). It carries out the reaction thiocyanate(in) = thiocyanate(out). It catalyses the reaction bromide(in) = bromide(out). The catalysed reaction is nitrate(in) = nitrate(out). The enzyme catalyses iodide(out) = iodide(in). Its activity is regulated as follows. Modulated by membrane voltage with depolarization favouring channel opening and hyperpolarization favouring channel closure. Inhibited by acidic pH and ATP binding due to a shift of voltage dependence of common gating to more positive voltages. Inhibited by 9-anthracene-carboxylic. Voltage-gated chloride channel involved in skeletal muscle excitability. Generates most of the plasma membrane chloride conductance in skeletal muscle fibers, stabilizes the resting membrane potential and contributes to the repolarization phase during action potential firing. Forms a homodimeric channel where each subunit has its own ion conduction pathway. Conducts double-barreled currents controlled by two types of gates, two fast glutamate gates that control each subunit independently and a slow common gate that opens and shuts off both subunits simultaneously. Has a significant open probability at muscle resting potential and is further activated upon membrane depolarization. Permeable to small monovalent anions with ion selectivity for chloride &gt; thiocyanate &gt; bromide &gt; nitrate &gt; iodide. The protein is Chloride channel protein 1 (Clcn1) of Mus musculus (Mouse).